Reading from the N-terminus, the 260-residue chain is Probable carbohydrate esterase At4g34215 (260 aa).

The tract at residues 1-22 is disordered; sequence MEGGSITPGEDKPEIQSPIPPN. Active-site residues include S31, D235, and H238.

The protein belongs to the carbohydrate esterase 6 family.

This chain is Probable carbohydrate esterase At4g34215, found in Arabidopsis thaliana (Mouse-ear cress).